Reading from the N-terminus, the 880-residue chain is Phosphoinositide 3-kinase regulatory subunit 5 (880 aa).

Met1 bears the N-acetylmethionine mark. Residues Ser25–Leu101 form a heterodimerization region. 4 disordered regions span residues Gly315–His339, Ser389–Arg416, Arg454–Glu510, and His565–Glu601. The span at Gly318–Glu335 shows a compositional bias: acidic residues. Phosphoserine is present on residues Ser458 and Ser507. The segment covering Ala571 to Asp585 has biased composition (pro residues). The segment at Pro653–Ser753 is interaction with beta-gamma G protein dimers.

Heterodimer of a catalytic subunit (PIK3CG/p120) and a regulatory (PIK3R5a/p101) subunit. Interacts with beta-gamma G protein dimers. In terms of tissue distribution, ubiquitously expressed with high expression in fetal brain compared to adult brain. Abundant expression is observed in cerebellum, cerebral cortex, cerebral meninges, and vermis cerebelli.

Its subcellular location is the nucleus. It is found in the cytoplasm. The protein resides in the cell membrane. With respect to regulation, greatly activated by G gamma proteins. Functionally, regulatory subunit of the PI3K gamma complex. Required for recruitment of the catalytic subunit to the plasma membrane via interaction with beta-gamma G protein dimers. Required for G protein-mediated activation of PIK3CG. This is Phosphoinositide 3-kinase regulatory subunit 5 (PIK3R5) from Homo sapiens (Human).